The chain runs to 692 residues: Elongation factor G (692 aa).

In terms of domain architecture, tr-type G spans E8–V282. Residues A17–T24, D81–H85, and N135–D138 each bind GTP.

The protein belongs to the TRAFAC class translation factor GTPase superfamily. Classic translation factor GTPase family. EF-G/EF-2 subfamily.

The protein resides in the cytoplasm. Functionally, catalyzes the GTP-dependent ribosomal translocation step during translation elongation. During this step, the ribosome changes from the pre-translocational (PRE) to the post-translocational (POST) state as the newly formed A-site-bound peptidyl-tRNA and P-site-bound deacylated tRNA move to the P and E sites, respectively. Catalyzes the coordinated movement of the two tRNA molecules, the mRNA and conformational changes in the ribosome. This chain is Elongation factor G, found in Lysinibacillus sphaericus (strain C3-41).